The primary structure comprises 942 residues: UvrABC system protein A (942 aa).

Position 32–39 (32–39 (GLSGSGKS)) interacts with ATP. The C4-type zinc finger occupies 251–278 (CPVCGFTVPELEPRLFSFNAPFGSCPTC). ABC transporter domains are found at residues 308 to 589 (WNPI…KKSI) and 609 to 937 (GNGR…HYLK). 641–648 (GVSGSGKS) lines the ATP pocket. The segment at 740-766 (CEACSGDGIIKIEMHFLPDVYVPCEVC) adopts a C4-type zinc-finger fold.

Belongs to the ABC transporter superfamily. UvrA family. Forms a heterotetramer with UvrB during the search for lesions.

It localises to the cytoplasm. Functionally, the UvrABC repair system catalyzes the recognition and processing of DNA lesions. UvrA is an ATPase and a DNA-binding protein. A damage recognition complex composed of 2 UvrA and 2 UvrB subunits scans DNA for abnormalities. When the presence of a lesion has been verified by UvrB, the UvrA molecules dissociate. The chain is UvrABC system protein A from Streptococcus pyogenes serotype M1.